A 408-amino-acid chain; its full sequence is tRNA(Met) cytidine acetate ligase (408 aa).

ATP-binding positions include 7-20 (IVEY…HKYH), Gly-102, Asn-170, and 195-196 (RI).

Belongs to the TmcAL family.

Its subcellular location is the cytoplasm. The enzyme catalyses cytidine(34) in elongator tRNA(Met) + acetate + ATP = N(4)-acetylcytidine(34) in elongator tRNA(Met) + AMP + diphosphate. In terms of biological role, catalyzes the formation of N(4)-acetylcytidine (ac(4)C) at the wobble position of elongator tRNA(Met), using acetate and ATP as substrates. First activates an acetate ion to form acetyladenylate (Ac-AMP) and then transfers the acetyl group to tRNA to form ac(4)C34. The sequence is that of tRNA(Met) cytidine acetate ligase from Clostridium kluyveri (strain NBRC 12016).